The chain runs to 217 residues: Thiamine-phosphate synthase (217 aa).

Residues 38-42 (QYRDK) and N70 each bind 4-amino-2-methyl-5-(diphosphooxymethyl)pyrimidine. Residues D71 and D90 each contribute to the Mg(2+) site. S109 is a binding site for 4-amino-2-methyl-5-(diphosphooxymethyl)pyrimidine. 2-[(2R,5Z)-2-carboxy-4-methylthiazol-5(2H)-ylidene]ethyl phosphate is bound at residue 136–138 (SIT). K139 serves as a coordination point for 4-amino-2-methyl-5-(diphosphooxymethyl)pyrimidine. G166 serves as a coordination point for 2-[(2R,5Z)-2-carboxy-4-methylthiazol-5(2H)-ylidene]ethyl phosphate.

Belongs to the thiamine-phosphate synthase family. It depends on Mg(2+) as a cofactor.

It carries out the reaction 2-[(2R,5Z)-2-carboxy-4-methylthiazol-5(2H)-ylidene]ethyl phosphate + 4-amino-2-methyl-5-(diphosphooxymethyl)pyrimidine + 2 H(+) = thiamine phosphate + CO2 + diphosphate. The enzyme catalyses 2-(2-carboxy-4-methylthiazol-5-yl)ethyl phosphate + 4-amino-2-methyl-5-(diphosphooxymethyl)pyrimidine + 2 H(+) = thiamine phosphate + CO2 + diphosphate. The catalysed reaction is 4-methyl-5-(2-phosphooxyethyl)-thiazole + 4-amino-2-methyl-5-(diphosphooxymethyl)pyrimidine + H(+) = thiamine phosphate + diphosphate. Its pathway is cofactor biosynthesis; thiamine diphosphate biosynthesis; thiamine phosphate from 4-amino-2-methyl-5-diphosphomethylpyrimidine and 4-methyl-5-(2-phosphoethyl)-thiazole: step 1/1. Functionally, condenses 4-methyl-5-(beta-hydroxyethyl)thiazole monophosphate (THZ-P) and 2-methyl-4-amino-5-hydroxymethyl pyrimidine pyrophosphate (HMP-PP) to form thiamine monophosphate (TMP). The protein is Thiamine-phosphate synthase of Nitrosococcus oceani (strain ATCC 19707 / BCRC 17464 / JCM 30415 / NCIMB 11848 / C-107).